Consider the following 576-residue polypeptide: Eukaryotic translation initiation factor 2A (576 aa).

4 WD repeats span residues 71–119 (LPAA…LVFS), 266–307 (DREG…VSII), 308–349 (PPAP…KKIT), and 351–396 (VEAA…MFYE). Disordered regions lie at residues 422-461 (SASL…QNST) and 475-505 (GSAN…NNKK). The segment covering 475 to 486 (GSANKHVNSSRQ) has biased composition (polar residues).

This sequence belongs to the WD repeat EIF2A family.

It localises to the cytoplasm. In terms of biological role, functions in the early steps of protein synthesis of a small number of specific mRNAs. Acts by directing the binding of methionyl-tRNAi to 40S ribosomal subunits. In contrast to the eIF-2 complex, it binds methionyl-tRNAi to 40S subunits in a codon-dependent manner, whereas the eIF-2 complex binds methionyl-tRNAi to 40S subunits in a GTP-dependent manner. The chain is Eukaryotic translation initiation factor 2A from Schizosaccharomyces pombe (strain 972 / ATCC 24843) (Fission yeast).